We begin with the raw amino-acid sequence, 327 residues long: Malate dehydrogenase (327 aa).

Residue 11 to 17 (GAAGQIG) participates in NAD(+) binding. Residues Arg92 and Arg98 each coordinate substrate. NAD(+) contacts are provided by residues Asn105, Gln112, and 129–131 (VGN). Asn131 and Arg162 together coordinate substrate. His187 functions as the Proton acceptor in the catalytic mechanism.

Belongs to the LDH/MDH superfamily. MDH type 2 family.

The catalysed reaction is (S)-malate + NAD(+) = oxaloacetate + NADH + H(+). Functionally, catalyzes the reversible oxidation of malate to oxaloacetate. This is Malate dehydrogenase from Leptospira biflexa serovar Patoc (strain Patoc 1 / Ames).